The primary structure comprises 158 residues: Small ribosomal subunit protein uS7 (158 aa).

The protein belongs to the universal ribosomal protein uS7 family. Part of the 30S ribosomal subunit. Contacts proteins S9 and S11.

Functionally, one of the primary rRNA binding proteins, it binds directly to 16S rRNA where it nucleates assembly of the head domain of the 30S subunit. Is located at the subunit interface close to the decoding center, probably blocks exit of the E-site tRNA. This chain is Small ribosomal subunit protein uS7, found in Flavobacterium johnsoniae (strain ATCC 17061 / DSM 2064 / JCM 8514 / BCRC 14874 / CCUG 350202 / NBRC 14942 / NCIMB 11054 / UW101) (Cytophaga johnsonae).